We begin with the raw amino-acid sequence, 183 residues long: Large ribosomal subunit protein eL18 (183 aa).

The interval 150-183 (RHFGPAPGAPRSHTKPYVRTKGHERARPRRRSNV) is disordered. The segment covering 161–183 (SHTKPYVRTKGHERARPRRRSNV) has biased composition (basic residues).

It belongs to the eukaryotic ribosomal protein eL18 family.

It is found in the cytoplasm. The protein is Large ribosomal subunit protein eL18 (RpL18) of Spodoptera frugiperda (Fall armyworm).